The primary structure comprises 226 residues: MEFQDFLLAASTGDLGAAPAAPEHVDLVEFRMDLAADPLAALDDYDGVLPVLATNRADWEGGAAADGGDRIDALAEAARTDCVAAVDIERSALVDDDTADGAEALAAARSTDTTTVVSAHDFDGTPSLSAMADLLGEACSLGDVGKLAVTPQDRGDALDVIRVTHEYSAAGMTVATMGMGDLGRHTRAVTPLYGSKLGYAPVADGETTAPGQYAPAALQALIADLQ.

Residues 29–31 and Arg-56 each bind 3-dehydroquinate; that span reads EFR. His-120 acts as the Proton donor/acceptor in catalysis. Lys-146 serves as the catalytic Schiff-base intermediate with substrate. Residues Arg-187, Thr-208, and Gln-212 each coordinate 3-dehydroquinate.

Belongs to the type-I 3-dehydroquinase family. As to quaternary structure, homodimer.

The catalysed reaction is 3-dehydroquinate = 3-dehydroshikimate + H2O. Its pathway is metabolic intermediate biosynthesis; chorismate biosynthesis; chorismate from D-erythrose 4-phosphate and phosphoenolpyruvate: step 3/7. Functionally, involved in the third step of the chorismate pathway, which leads to the biosynthesis of aromatic amino acids. Catalyzes the cis-dehydration of 3-dehydroquinate (DHQ) and introduces the first double bond of the aromatic ring to yield 3-dehydroshikimate. In Halobacterium salinarum (strain ATCC 700922 / JCM 11081 / NRC-1) (Halobacterium halobium), this protein is 3-dehydroquinate dehydratase.